A 591-amino-acid polypeptide reads, in one-letter code: Inactive metallocarboxypeptidase ECM14 (591 aa).

The N-terminal stretch at 1-21 is a signal peptide; that stretch reads MRLFAHLAVLAILACAVPITA. A propeptide spanning residues 22-175 is cleaved from the precursor; the sequence is IPSFLSNSYP…QTIYESYPSS (154 aa). In terms of domain architecture, Peptidase M14 spans 203–523; that stretch reads DYQPFSVIVP…NAVMVLGRFL (321 aa). Residues H265 and E268 each coordinate Zn(2+). Residues 265–268, R323, and 340–341 each bind substrate; these read HARE and DR. A disulfide bond links C334 and C357. 3 N-linked (GlcNAc...) asparagine glycosylation sites follow: N350, N381, and N386. Position 397 (H397) interacts with Zn(2+). 398-399 lines the substrate pocket; the sequence is SY. The segment at 533–591 is disordered; sequence DWEDESQRPKAGEDDIPSDNELDENDDSWIPYDYRNHDDQNEGEGYDNDEWGFRRRRKR. Composition is skewed to acidic residues over residues 546–559 and 573–582; these read DDIP…ENDD and NEGEGYDNDE.

Belongs to the peptidase M14 family. Requires Zn(2+) as cofactor.

It localises to the vacuole. It is found in the secreted. Functionally, inactive carboxypeptidase that may play a role in cell wall organization and biogenesis. The protein is Inactive metallocarboxypeptidase ECM14 (ECM14) of Paracoccidioides brasiliensis (strain Pb03).